A 502-amino-acid polypeptide reads, in one-letter code: Probable malate:quinone oxidoreductase (502 aa).

This sequence belongs to the MQO family. Requires FAD as cofactor.

It catalyses the reaction (S)-malate + a quinone = a quinol + oxaloacetate. Its pathway is carbohydrate metabolism; tricarboxylic acid cycle; oxaloacetate from (S)-malate (quinone route): step 1/1. The chain is Probable malate:quinone oxidoreductase from Oceanobacillus iheyensis (strain DSM 14371 / CIP 107618 / JCM 11309 / KCTC 3954 / HTE831).